A 508-amino-acid polypeptide reads, in one-letter code: Photosystem II CP47 reaction center protein (508 aa).

6 consecutive transmembrane segments (helical) span residues 21-36 (AVHI…WAGS), 101-115 (IVFS…IWHW), 140-156 (GIHL…FGAF), 203-218 (IAAG…FHLS), 237-252 (VLSS…AFVV), and 457-472 (SFAL…HGAR).

This sequence belongs to the PsbB/PsbC family. PsbB subfamily. As to quaternary structure, PSII is composed of 1 copy each of membrane proteins PsbA, PsbB, PsbC, PsbD, PsbE, PsbF, PsbH, PsbI, PsbJ, PsbK, PsbL, PsbM, PsbT, PsbX, PsbY, PsbZ, Psb30/Ycf12, at least 3 peripheral proteins of the oxygen-evolving complex and a large number of cofactors. It forms dimeric complexes. Interacts with PAM68. Interacts with HHL1. Requires Binds multiple chlorophylls. PSII binds additional chlorophylls, carotenoids and specific lipids. as cofactor.

The protein localises to the plastid. The protein resides in the chloroplast thylakoid membrane. One of the components of the core complex of photosystem II (PSII). It binds chlorophyll and helps catalyze the primary light-induced photochemical processes of PSII. PSII is a light-driven water:plastoquinone oxidoreductase, using light energy to abstract electrons from H(2)O, generating O(2) and a proton gradient subsequently used for ATP formation. The polypeptide is Photosystem II CP47 reaction center protein (Arabidopsis thaliana (Mouse-ear cress)).